The primary structure comprises 170 residues: uncharacterized protein (170 aa).

Residues 8–167 (LLIREFEFKD…DEYYYAILEE (160 aa)) form the N-acetyltransferase domain.

This sequence belongs to the acetyltransferase family.

This is an uncharacterized protein from Bacillus subtilis (strain 168).